The chain runs to 239 residues: DNA repair protein RecO (239 aa).

Belongs to the RecO family.

Involved in DNA repair and RecF pathway recombination. The chain is DNA repair protein RecO from Stenotrophomonas maltophilia (strain K279a).